A 74-amino-acid polypeptide reads, in one-letter code: Homeobox protein Hox-B8 (74 aa).

Low complexity predominate over residues 1–24; that stretch reads YTDCKLAASGLGEEAESSEQSPSP. The segment at 1–28 is disordered; it reads YTDCKLAASGLGEEAESSEQSPSPTQLF. The Antp-type hexapeptide signature appears at 27–32; that stretch reads LFPWMR. The segment at residues 39 to 74 is a DNA-binding region (homeobox); it reads RRRGRQTYSRYQTLELEKEFLFNPYLTRKRRIEVSR.

This sequence belongs to the Antp homeobox family.

It is found in the nucleus. Its function is as follows. Sequence-specific transcription factor which is part of a developmental regulatory system that provides cells with specific positional identities on the anterior-posterior axis. This is Homeobox protein Hox-B8 (HOXB8) from Gallus gallus (Chicken).